The chain runs to 295 residues: 4-hydroxy-tetrahydrodipicolinate synthase (295 aa).

Residue Thr-46 coordinates pyruvate. Tyr-134 acts as the Proton donor/acceptor in catalysis. Residue Lys-162 is the Schiff-base intermediate with substrate of the active site. Val-204 is a binding site for pyruvate.

The protein belongs to the DapA family. As to quaternary structure, homotetramer; dimer of dimers.

It localises to the cytoplasm. It catalyses the reaction L-aspartate 4-semialdehyde + pyruvate = (2S,4S)-4-hydroxy-2,3,4,5-tetrahydrodipicolinate + H2O + H(+). The protein operates within amino-acid biosynthesis; L-lysine biosynthesis via DAP pathway; (S)-tetrahydrodipicolinate from L-aspartate: step 3/4. In terms of biological role, catalyzes the condensation of (S)-aspartate-beta-semialdehyde [(S)-ASA] and pyruvate to 4-hydroxy-tetrahydrodipicolinate (HTPA). The chain is 4-hydroxy-tetrahydrodipicolinate synthase from Oceanobacillus iheyensis (strain DSM 14371 / CIP 107618 / JCM 11309 / KCTC 3954 / HTE831).